Reading from the N-terminus, the 214-residue chain is uncharacterized protein (214 aa).

The N-terminal stretch at 1 to 17 (MWCFIVFLTIFLPTLEG) is a signal peptide. N-linked (GlcNAc...) asparagine glycans are attached at residues asparagine 88 and asparagine 139.

As to expression, component of the acid-insoluble organic matrix of calcified layers of the shell (at protein level).

The protein resides in the secreted. This is an uncharacterized protein from Lottia gigantea (Giant owl limpet).